The sequence spans 528 residues: Na(+)/H(+) antiporter NhaB (528 aa).

The next 11 helical transmembrane spans lie at 23 to 43, 45 to 65, 90 to 110, 136 to 156, 204 to 224, 237 to 257, 305 to 325, 350 to 370, 392 to 412, 450 to 470, and 479 to 499; these read VAII…NPFV, GWLL…CYPL, LVAN…IYFM, CFAA…AVVI, LLMH…VGEP, FGEF…CGLI, GIIA…VGLI, EEAL…AVII, LALF…VFVG, ATPN…APLI, and VMAL…IMFF.

Belongs to the NhaB Na(+)/H(+) (TC 2.A.34) antiporter family.

Its subcellular location is the cell inner membrane. It carries out the reaction 2 Na(+)(in) + 3 H(+)(out) = 2 Na(+)(out) + 3 H(+)(in). Functionally, na(+)/H(+) antiporter that extrudes sodium in exchange for external protons. Can also transport lithium and potassium. This Vibrio parahaemolyticus serotype O3:K6 (strain RIMD 2210633) protein is Na(+)/H(+) antiporter NhaB.